Here is a 201-residue protein sequence, read N- to C-terminus: 7-methyl-GTP pyrophosphatase (201 aa).

Catalysis depends on Asp-73, which acts as the Proton acceptor.

Belongs to the Maf family. YceF subfamily. A divalent metal cation serves as cofactor.

Its subcellular location is the cytoplasm. The enzyme catalyses N(7)-methyl-GTP + H2O = N(7)-methyl-GMP + diphosphate + H(+). Its function is as follows. Nucleoside triphosphate pyrophosphatase that hydrolyzes 7-methyl-GTP (m(7)GTP). May have a dual role in cell division arrest and in preventing the incorporation of modified nucleotides into cellular nucleic acids. The protein is 7-methyl-GTP pyrophosphatase of Thiobacillus denitrificans (strain ATCC 25259 / T1).